The chain runs to 360 residues: Probable dual-specificity RNA methyltransferase RlmN (360 aa).

The active-site Proton acceptor is the glutamate 91. The region spanning glutamine 97–aspartate 335 is the Radical SAM core domain. A disulfide bridge links cysteine 104 with cysteine 340. 3 residues coordinate [4Fe-4S] cluster: cysteine 111, cysteine 115, and cysteine 118. Residues glycine 163–glutamate 164, serine 195, serine 218–histidine 220, and asparagine 296 contribute to the S-adenosyl-L-methionine site. The active-site S-methylcysteine intermediate is cysteine 340.

The protein belongs to the radical SAM superfamily. RlmN family. Requires [4Fe-4S] cluster as cofactor.

The protein resides in the cytoplasm. It catalyses the reaction adenosine(2503) in 23S rRNA + 2 reduced [2Fe-2S]-[ferredoxin] + 2 S-adenosyl-L-methionine = 2-methyladenosine(2503) in 23S rRNA + 5'-deoxyadenosine + L-methionine + 2 oxidized [2Fe-2S]-[ferredoxin] + S-adenosyl-L-homocysteine. The enzyme catalyses adenosine(37) in tRNA + 2 reduced [2Fe-2S]-[ferredoxin] + 2 S-adenosyl-L-methionine = 2-methyladenosine(37) in tRNA + 5'-deoxyadenosine + L-methionine + 2 oxidized [2Fe-2S]-[ferredoxin] + S-adenosyl-L-homocysteine. Its function is as follows. Specifically methylates position 2 of adenine 2503 in 23S rRNA and position 2 of adenine 37 in tRNAs. The protein is Probable dual-specificity RNA methyltransferase RlmN of Streptococcus equi subsp. equi (strain 4047).